A 590-amino-acid polypeptide reads, in one-letter code: Oligoendopeptidase F homolog (590 aa).

Residue H381 participates in Zn(2+) binding. The active site involves E382. Zn(2+) is bound by residues H385 and H388.

It belongs to the peptidase M3B family. It depends on Zn(2+) as a cofactor.

This is Oligoendopeptidase F homolog (pepF) from Borreliella burgdorferi (strain ATCC 35210 / DSM 4680 / CIP 102532 / B31) (Borrelia burgdorferi).